A 219-amino-acid polypeptide reads, in one-letter code: ATP synthase delta chain, chloroplastic (219 aa).

A chloroplast-targeting transit peptide spans 1–33; sequence MLAAKSIAGPRAFKASAVRAAPKAGRRTVVVMA.

Belongs to the ATPase delta chain family. F-type ATPases have 2 components, F(1) - the catalytic core - and F(0) - the membrane proton channel. F(1) has five subunits: alpha(3), beta(3), gamma(1), delta(1), epsilon(1). F(0) has four main subunits: a(1), b(1), b'(1) and c(10-14). The alpha and beta chains form an alternating ring which encloses part of the gamma chain. F(1) is attached to F(0) by a central stalk formed by the gamma and epsilon chains, while a peripheral stalk is formed by the delta, b and b' chains.

It is found in the plastid. Its subcellular location is the chloroplast thylakoid membrane. Its function is as follows. F(1)F(0) ATP synthase produces ATP from ADP in the presence of a proton or sodium gradient. F-type ATPases consist of two structural domains, F(1) containing the extramembraneous catalytic core and F(0) containing the membrane proton channel, linked together by a central stalk and a peripheral stalk. During catalysis, ATP synthesis in the catalytic domain of F(1) is coupled via a rotary mechanism of the central stalk subunits to proton translocation. This protein seems to be part of the stalk that links CF(0) to CF(1). It either transmits conformational changes from CF(0) into CF(1) or is implicated in proton conduction. This is ATP synthase delta chain, chloroplastic from Chlamydomonas reinhardtii (Chlamydomonas smithii).